We begin with the raw amino-acid sequence, 57 residues long: Temporin-ALk (57 aa).

Residues 1 to 22 form the signal peptide; sequence MFTLKKSLLLLFFLGTINLSLC. Residues 23 to 46 constitute a propeptide that is removed on maturation; the sequence is EQERNAEEERRDDLGERQAEVEKR. Serine 56 is subject to Serine amide.

This sequence belongs to the frog skin active peptide (FSAP) family. Temporin subfamily. In terms of tissue distribution, expressed by the skin glands.

It is found in the secreted. Antimicrobial peptide with weak activity against Gram-positive and Gram-negative bacteria and against fungi. Has been tested against S.aureus (MIC=15.0 ug/mL), B.pumilus (no activity detected), B.cereus (no activity detected), E.coli (MIC=30.0 ug/mL), B.dysenteriae (MIC=60.0 ug/mL), A.cacoaceticus (MIC=75.0 ug/mL), P.aeruginosa (MIC=25.0 ug/mL) and C.albicans (MIC=15.0 ug/mL). Also shows a weak hemolytic activity. The polypeptide is Temporin-ALk (Amolops loloensis (Lolokou Sucker Frog)).